Here is a 181-residue protein sequence, read N- to C-terminus: Sodium/potassium-transporting ATPase subunit beta-1-interacting protein 3 (181 aa).

4 helical membrane-spanning segments follow: residues 2 to 22, 35 to 55, 62 to 82, and 152 to 172; these read GCCT…LSAL, APIL…FGTI, IMVY…IICF, and VQIL…SISM.

This sequence belongs to the NKAIN family. As to quaternary structure, interacts with ATP1B1. Detected in the brain only and specifically in neurons. Expressed in multiple regions such as cerebral cortex, thalamus, hippocampus, olfactory bulb and brainstem as well as in cerebellum with low expression in granular cell layer.

The protein localises to the cell membrane. The sequence is that of Sodium/potassium-transporting ATPase subunit beta-1-interacting protein 3 (Nkain3) from Mus musculus (Mouse).